Consider the following 90-residue polypeptide: MKSASLILFVALVALTYARSYEDVKEEIKNEVEKEILDDLEEENDELDDNTQEVNDPRARRWRRIVRRIRVRPLLPYIPCIIQAYQTGKK.

The first 20 residues, 1–20 (MKSASLILFVALVALTYARS), serve as a signal peptide directing secretion. Positions 21–59 (YEDVKEEIKNEVEKEILDDLEEENDELDDNTQEVNDPRA) are excised as a propeptide. T87 carries the post-translational modification Threonine amide.

Belongs to the arminin family. As to expression, expressed in entodermal epithelium along the body column.

The protein localises to the secreted. It is found in the target cell membrane. Antimicrobial peptide with a broad-spectrum antimicrobial activity. Keeps its antibacterial activity under a wide range of salt concentrations that mimic physiological conditions of human blood, which is surprising, since Hydra is an obligate freshwater animal with nearly no salt tolerance. Does not affect red blood cells. The polypeptide is Arminin 45266 (Hydra vulgaris (Hydra)).